A 410-amino-acid polypeptide reads, in one-letter code: UDP-N-acetylglucosamine--dolichyl-phosphate N-acetylglucosaminephosphotransferase (410 aa).

At 1–10 (MWAFPELPLP) the chain is on the lumenal side. The helical transmembrane segment at 11-40 (LPLLVNLIGSLLGFVATVTLIPAFRSHFIA) threads the bilayer. Over 41–60 (ARLCGQDLNKLSQQQIPESQ) the chain is Cytoplasmic. Residues 46–48 (QDL) and glutamate 58 contribute to the UDP-N-acetyl-alpha-D-glucosamine site. A helical membrane pass occupies residues 61 to 80 (GVISGAVFLIILFCFIPFPF). The Lumenal segment spans residues 81-93 (LNCFVEEQCKAFP). The helical transmembrane segment at 94–120 (HHEFVALIGALLAICCMIFLGFADDVL) threads the bilayer. Topologically, residues 121-123 (NLR) are cytoplasmic. Residues 124 to 145 (WRHKLLLPTAASLPLLMVYFTN) form a helical membrane-spanning segment. Residue lysine 127 coordinates dolichyl phosphate. At 146–168 (FGNTTIVVPKPFRWILGLHLDLG) the chain is on the lumenal side. An N-linked (GlcNAc...) asparagine glycan is attached at asparagine 148. The helical transmembrane segment at 169 to 188 (ILYYVYMGLLAVFCTNAINI) threads the bilayer. Residue 180–188 (VFCTNAINI) participates in dolichyl phosphate binding. Asparagine 187 lines the Mg(2+) pocket. Residues 189–194 (LAGING) lie on the Cytoplasmic side of the membrane. Residue asparagine 193 coordinates UDP-N-acetyl-alpha-D-glucosamine. Residues 195–215 (LEAGQSLVISASIIVFNLVEL) traverse the membrane as a helical segment. The Lumenal segment spans residues 216-220 (EGDYR). The chain crosses the membrane as a helical span at residues 221–244 (DDHIFSLYFMIPFFFTTLGLLYHN). At 245–252 (WYPSRVFV) the chain is on the cytoplasmic side. The chain crosses the membrane as a helical span at residues 253–271 (GDTFCYFAGMTFAVVGILG). Position 254 (aspartate 254) interacts with Mg(2+). At 272-273 (HF) the chain is on the lumenal side. Residues 274-295 (SKTMLLFFMPQVFNFLYSLPQL) form a helical membrane-spanning segment. Residues 296–377 (FHIIPCPRHR…LLLKVFGPIH (82 aa)) lie on the Cytoplasmic side of the membrane. 303–305 (RHR) serves as a coordination point for UDP-N-acetyl-alpha-D-glucosamine. Residues 378–402 (ERNLTLLLLLLQVLSSAATFSIRYQ) traverse the membrane as a helical segment. Residues 403–410 (LVRLFYDV) are Lumenal-facing.

Belongs to the glycosyltransferase 4 family. As to quaternary structure, homodimer. Mg(2+) is required as a cofactor.

The protein localises to the endoplasmic reticulum membrane. It carries out the reaction a di-trans,poly-cis-dolichyl phosphate + UDP-N-acetyl-alpha-D-glucosamine = an N-acetyl-alpha-D-glucosaminyl-diphospho-di-trans,poly-cis-dolichol + UMP. The protein operates within protein modification; protein glycosylation. Its activity is regulated as follows. Inhibited by natural nucleoside antibiotic tunicamycin, which acts as a structural analog and competitor of UDP-GlcNAc. Functionally, UDP-N-acetylglucosamine--dolichyl-phosphate N-acetylglucosaminephosphotransferase that operates in the biosynthetic pathway of dolichol-linked oligosaccharides, the glycan precursors employed in protein asparagine (N)-glycosylation. The assembly of dolichol-linked oligosaccharides begins on the cytosolic side of the endoplasmic reticulum membrane and finishes in its lumen. The sequential addition of sugars to dolichol pyrophosphate produces dolichol-linked oligosaccharides containing fourteen sugars, including two GlcNAcs, nine mannoses and three glucoses. Once assembled, the oligosaccharide is transferred from the lipid to nascent proteins by oligosaccharyltransferases. Catalyzes the initial step of dolichol-linked oligosaccharide biosynthesis, transfering GlcNAc-1-P from cytosolic UDP-GlcNAc onto the carrier lipid dolichyl phosphate (P-dolichol), yielding GlcNAc-P-P-dolichol embedded in the cytoplasmic leaflet of the endoplasmic reticulum membrane. The protein is UDP-N-acetylglucosamine--dolichyl-phosphate N-acetylglucosaminephosphotransferase of Mus musculus (Mouse).